The primary structure comprises 463 residues: Exodeoxyribonuclease 7 large subunit (463 aa).

The protein belongs to the XseA family. As to quaternary structure, heterooligomer composed of large and small subunits.

The protein resides in the cytoplasm. The catalysed reaction is Exonucleolytic cleavage in either 5'- to 3'- or 3'- to 5'-direction to yield nucleoside 5'-phosphates.. Bidirectionally degrades single-stranded DNA into large acid-insoluble oligonucleotides, which are then degraded further into small acid-soluble oligonucleotides. The sequence is that of Exodeoxyribonuclease 7 large subunit from Bordetella pertussis (strain Tohama I / ATCC BAA-589 / NCTC 13251).